We begin with the raw amino-acid sequence, 242 residues long: Zinc-finger homeodomain protein 11 (242 aa).

The ZF-HD dimerization-type; degenerate zinc finger occupies 31 to 82 (YKECLKNHAANLGGHALDGCGEFMPSPTATSTDPSSLRCAACGCHRNFHRRD). Disordered stretches follow at residues 83-109 (PSEN…SRHV) and 135-161 (PGPS…RTRT). The homeobox; atypical DNA-binding region spans 156-213 (RKRTRTKFTPEQKIKMRAFAEKAGWKINGCDEKSVREFCNEVGIERGVLKVWMHNNKY).

As to quaternary structure, homo- and heterodimer with other ZFHD proteins. Interacts with HIPP20, HIPP21, HIPP22, HIPP23, HIPP24, HIPP26, HIPP27, HIPP30 and MED25 (via ACID domain). Interacts with NAC019, NAC055 and NAC072 (via NAC binding domain). Binds to ZHD1, ZHD2, ZHD3, ZHD4, ZHD5, ZHD6, ZHD7, ZHD8, ZHD9, ZHD12, ZHD13 and ZHD14. In terms of tissue distribution, expressed in roots, inflorescences, open flowers and seeds. Detected in stems and seedlings.

Its subcellular location is the nucleus. Functionally, transcription factor involved in the up-regulation of several stress-inducible genes. Acts as a transcriptional activator by interacting with MED25 and NAC proteins. Involved in increased drought tolerance. This chain is Zinc-finger homeodomain protein 11 (ZHD11), found in Arabidopsis thaliana (Mouse-ear cress).